Here is a 480-residue protein sequence, read N- to C-terminus: Adenylosuccinate synthetase, chloroplastic (480 aa).

The N-terminal 54 residues, 1 to 54 (MATARVMVADRARAFGGTTATRARRDDQGRRVTIARGIPSRARVVVARASERAY), are a transit peptide targeting the chloroplast. Residues 69-75 (GDEGKGK) and 97-99 (GHT) each bind GTP. The Proton acceptor role is filled by D70. The Mg(2+) site is built by D70 and G97. IMP contacts are provided by residues 70 to 73 (DEGK), 95 to 98 (NAGH), T187, R201, N278, T293, and R357. H98 (proton donor) is an active-site residue. 353-359 (TTTGRPR) serves as a coordination point for substrate. GTP contacts are provided by residues R359, 385 to 387 (KLD), and 468 to 470 (GVG).

It belongs to the adenylosuccinate synthetase family. Homodimer. Requires Mg(2+) as cofactor.

It is found in the plastid. The protein localises to the chloroplast. It catalyses the reaction IMP + L-aspartate + GTP = N(6)-(1,2-dicarboxyethyl)-AMP + GDP + phosphate + 2 H(+). Its pathway is purine metabolism; AMP biosynthesis via de novo pathway; AMP from IMP: step 1/2. Its function is as follows. Plays an important role in the de novo pathway and in the salvage pathway of purine nucleotide biosynthesis. Catalyzes the first committed step in the biosynthesis of AMP from IMP. This chain is Adenylosuccinate synthetase, chloroplastic, found in Ostreococcus tauri.